A 646-amino-acid polypeptide reads, in one-letter code: MSSRKQARLEAKQFIDTLSVQPYPNSSKVYVEGSRPDIRVPMREISLADSLIGGTKEAPIFEPNEPVRVYDTSGVYTDPEHTIDLYNGLPKLREGWIEERSDTELLDEVSSVYTKERLEDETLDDLRYGNLPRIRRAKDGQCVTQLHYARQGIITPEMEYIALRENMGRAQYRDEVLNQQHPGQSFGANLPKDITAEFVRKEVAEGRAIIPSNINHPESEPMIIGRNFLVKVNANIGNSSVTSSIEEEVEKLVWATRWGGDTVMDLSTGRNIHETREWILRNSPVPIGTVPMYQALEKVNGVAENLNWEVMRDTLIEQAEQGVDYFTIHAGLLLRYVPMTAKRVTGIVSRGGSIIAKWCLAHHQESFLYTHFREICEICAKYDVAISLGDGLRPGSVADANDEAQFAELRTLGELTKVAWEYDVQVIIEGPGHVPMHMIKENMEEQLEHCHEAPFYTLGPLTTDVAPGYDHITSGIGAAMIGWYGCAMLCYVTPKEHLGLPNKEDVKVGMITYKLAAHAADLAKGHPGAQVRDNALSKARFEFRWEDQFNLSLDPDTARAFHDETLPQESGKVAHFCSMCGPKFCSMKISQEVREYAKDTEQVAADQAISIKMLDDPLEGMRQKSQEFRDTGSELYHPAAYAEVSD.

Residues Asn235, Met264, Tyr293, His329, 349-351 (SRG), 390-393 (DGLR), and Glu429 contribute to the substrate site. His433 is a binding site for Zn(2+). Position 456 (Tyr456) interacts with substrate. Position 497 (His497) interacts with Zn(2+). Cys577, Cys580, and Cys585 together coordinate [4Fe-4S] cluster.

Belongs to the ThiC family. Homodimer. [4Fe-4S] cluster is required as a cofactor.

The enzyme catalyses 5-amino-1-(5-phospho-beta-D-ribosyl)imidazole + S-adenosyl-L-methionine = 4-amino-2-methyl-5-(phosphooxymethyl)pyrimidine + CO + 5'-deoxyadenosine + formate + L-methionine + 3 H(+). It functions in the pathway cofactor biosynthesis; thiamine diphosphate biosynthesis. Catalyzes the synthesis of the hydroxymethylpyrimidine phosphate (HMP-P) moiety of thiamine from aminoimidazole ribotide (AIR) in a radical S-adenosyl-L-methionine (SAM)-dependent reaction. The chain is Phosphomethylpyrimidine synthase from Vibrio campbellii (strain ATCC BAA-1116).